The following is a 374-amino-acid chain: 2-oxoglutarate-Fe(II) type oxidoreductase ppzC (374 aa).

The segment at lysine 111 to threonine 130 is disordered. A Fe2OG dioxygenase domain is found at tyrosine 220–phenylalanine 330. Residues histidine 254, aspartate 256, and histidine 311 each coordinate Fe cation. Residue arginine 321 coordinates 2-oxoglutarate.

Belongs to the iron/ascorbate-dependent oxidoreductase family. Requires Fe(2+) as cofactor.

It carries out the reaction peramine + 2-oxoglutarate + O2 = 8-hydroxyperamine + succinate + CO2. It functions in the pathway secondary metabolite biosynthesis. In terms of biological role, 2-oxoglutarate-Fe(II) type oxidoreductase; part of the gene cluster that mediates the biosynthesis of pyrrolopyrazines, secondary metabolites showing insecticidal activity. Within the pathway, ppzC uses peramine as substrate for hydroxylation to yield the novel analog 8-hydroxyperamine. The single multifunctional NRPS ppzA is sufficient to produce peramine via condensation of 1-pyrroline-5-carboxylate and arginine, N-methylation of the alpha-amino group of arginine and reduction of the thioester and the cyclization to form an iminium ion resulting in release from the peptide synthetase. Deprotonation of this intermediate and oxidation of the pyrroline ring would give rise to peramine. In Epichloe species that produce only peramine, the peramine synthetase gene is not localized in a gene cluster, in contrast to Metarhizium species that contain additional pyrrolopyrazine biosynthesis genes. The 2-oxoglutarate-Fe(II) type oxidoreductase ppzC hydroxylates peramine to yield the newly identified compound 8-hydroxyperamine whereas ppzD converts L-proline into trans-4-hydroxy-L-proline, a precursor of peramine biosynthesis. This chain is 2-oxoglutarate-Fe(II) type oxidoreductase ppzC, found in Metarhizium rileyi (strain RCEF 4871) (Nomuraea rileyi).